A 428-amino-acid chain; its full sequence is C4-dicarboxylate transport protein (428 aa).

9 helical membrane passes run 4 to 24 (SLFKSLYFQVLTAIAIGILLG), 44 to 64 (LIKMIIAPVIFCTVVTGIAGM), 76 to 96 (VALLYFEIVSTIALIIGLIIV), 142 to 162 (IGAFASGNILQVLLFAVLFGF), 184 to 204 (VIFGIINMIMRLAPIGAFGAM), 222 to 242 (LIICFYITCILFVVVVLGTIA), 289 to 309 (VVGLVIPTGYSFNLDGTSIYL), 326 to 346 (IFHQITLLVVLLLSSKGAAGV), and 352 to 372 (IVLAATISAVGHLPVAGLALI).

It belongs to the dicarboxylate/amino acid:cation symporter (DAACS) (TC 2.A.23) family.

Its subcellular location is the cell inner membrane. Functionally, responsible for the transport of dicarboxylates such as succinate, fumarate, and malate from the periplasm across the membrane. The protein is C4-dicarboxylate transport protein of Salmonella arizonae (strain ATCC BAA-731 / CDC346-86 / RSK2980).